The sequence spans 67 residues: Probable Sec-independent protein translocase protein TatE (67 aa).

The chain crosses the membrane as a helical span at residues 4–21 (ISITKLLVVAALVVLLFG).

The protein belongs to the TatA/E family. TatE subfamily.

It localises to the cell inner membrane. Functionally, part of the twin-arginine translocation (Tat) system that transports large folded proteins containing a characteristic twin-arginine motif in their signal peptide across membranes. TatE shares overlapping functions with TatA. The chain is Probable Sec-independent protein translocase protein TatE from Shigella flexneri.